We begin with the raw amino-acid sequence, 316 residues long: tRNA dimethylallyltransferase (316 aa).

ATP is bound at residue 17–24; sequence GPTASGKT. 19–24 serves as a coordination point for substrate; sequence TASGKT. 4 interaction with substrate tRNA regions span residues 42-45, 166-170, 247-252, and 280-287; these read DSAL, QRLSR, RCVGYR, and KRQITWLR.

This sequence belongs to the IPP transferase family. Monomer. The cofactor is Mg(2+).

The enzyme catalyses adenosine(37) in tRNA + dimethylallyl diphosphate = N(6)-dimethylallyladenosine(37) in tRNA + diphosphate. Catalyzes the transfer of a dimethylallyl group onto the adenine at position 37 in tRNAs that read codons beginning with uridine, leading to the formation of N6-(dimethylallyl)adenosine (i(6)A). This is tRNA dimethylallyltransferase from Escherichia coli O81 (strain ED1a).